The following is a 680-amino-acid chain: MRKFNSHSIPIRLNLLFSIVILLFMTIIGRLLYMQVLNKDFYEKKLASASQTKITSSSARGEIYDASGKPLVENTLKQVVSFTRSNKMTATDLKETAKKLLTYVSISSPNLTERQLADYYLADPEIYKKIVEALPSEKRLDSDGNRLSESELYNNAVDSVQTSQLNYTEDEKKEIYLFSQLNAVGNFATGTIATDPLNDSQVAVIASISKEMPGISISTSWDRKVLETSLSSIVGSVSSEKAGLPAEEAEAYLKKGYSLNDRVGTSYLEKQYEETLQGKRSVKEIHLDKYGNMESVDTIEEGSKGNNIKLTIDLAFQDSVDALLKSYFNSELENGGAKYSEGVYAVALNPKTGAVLSMSGIKHDLKTGELTPDSLGTVTNVFVPGSVVKAATISSGWENGVLSGNQTLTDQSIVFQGSAPINSWYTQAYGSFPITAVQALEYSSNTYMVQTALGLMGQTYQPNMFVGTSNLESAMEKLRSTFGEYGLGTATGIDLPDESTGFVPKEYSFANYITNAFGQFDNYTPMQLAQYVATIANNGVRVAPRIVEGIYGNNDKGGLGDLIQQLQPTEMNKVNISDSDMSILHQGFYQVAHGTSGLTTGRAFSNGALVSISGKTGTAESYVADGQQATNTNAVAYAPSDNPQIAVAVVFPHNTNLTNGVGPSIARDIINLYQKYHPMN.

At 1–8 the chain is on the cytoplasmic side; it reads MRKFNSHS. A helical membrane pass occupies residues 9–29; the sequence is IPIRLNLLFSIVILLFMTIIG. Over 30 to 680 the chain is Extracellular; it reads RLLYMQVLNK…NLYQKYHPMN (651 aa). The active-site Acyl-ester intermediate is Ser-386.

It belongs to the transpeptidase family. In terms of assembly, interacts with MreC in the elongasome.

The protein localises to the cell membrane. Its function is as follows. A transpeptidase that forms peptide cross-links between adjacent glycan strands in cell wall peptidoglycan (PG). Part of the elongasome machinery that synthesizes peripheral PG. This chain is Penicillin-binding protein 2B, found in Streptococcus pneumoniae serotype 2 (strain D39 / NCTC 7466).